The following is a 143-amino-acid chain: Peptidyl-prolyl cis-trans isomerase B (143 aa).

Residues 1–143 (MKTGYFLLED…DVMKEVRVEG (143 aa)) form the PPIase cyclophilin-type domain.

The protein belongs to the cyclophilin-type PPIase family.

The protein resides in the cytoplasm. The catalysed reaction is [protein]-peptidylproline (omega=180) = [protein]-peptidylproline (omega=0). Inhibited by cyclosporin A (CsA). In terms of biological role, PPIases accelerate the folding of proteins. It catalyzes the cis-trans isomerization of proline imidic peptide bonds in oligopeptides. The protein is Peptidyl-prolyl cis-trans isomerase B (ppiB) of Bacillus subtilis (strain 168).